The primary structure comprises 335 residues: Foldase protein PrsA (335 aa).

Positions 1–20 are cleaved as a signal peptide; that stretch reads MKKKIFAGAVTLLSVAVLAA. Cys-21 carries N-palmitoyl cysteine lipidation. A lipid anchor (S-diacylglycerol cysteine) is attached at Cys-21. A PpiC domain is found at 142 to 239; the sequence is TPEVTAQIIK…ASYYIVKLVK (98 aa). The disordered stretch occupies residues 300 to 335; sequence TGSSTSSSSAASSSKTSESSSAAESSSKEASSSAAE. Residues 302 to 335 show a composition bias toward low complexity; the sequence is SSTSSSSAASSSKTSESSSAAESSSKEASSSAAE.

This sequence belongs to the PrsA family.

Its subcellular location is the cell membrane. The enzyme catalyses [protein]-peptidylproline (omega=180) = [protein]-peptidylproline (omega=0). In terms of biological role, plays a major role in protein secretion by helping the post-translocational extracellular folding of several secreted proteins. This chain is Foldase protein PrsA, found in Streptococcus sanguinis (strain SK36).